The primary structure comprises 150 residues: Snaclec rhinocetin subunit beta (150 aa).

The N-terminal stretch at 1-23 is a signal peptide; that stretch reads MGRFIFLSSGLLVVFLSLSGTGA. 3 disulfide bridges follow: cysteine 27–cysteine 38, cysteine 55–cysteine 144, and cysteine 121–cysteine 136. Positions 34–145 constitute a C-type lectin domain; the sequence is YEGYCYKVFK…CNRQQYFVCK (112 aa).

Belongs to the snaclec family. As to quaternary structure, heterodimer; disulfide-linked. Expressed by the venom gland.

It is found in the secreted. Functionally, antagonist of the alpha-2 subunit of the integrin alpha-2/beta-1 (ITGA2/ITGB1) on human platelets and endothelial cells. This protein inhibits collagen-stimulated activation of human platelets in a dose-dependent manner. In addition, it antagonizes the binding of monoclonal antibodies against the alpha-2 subunit of integrin alpha-2/beta-1 to platelets and it coimmunoprecipitates with this integrin. The polypeptide is Snaclec rhinocetin subunit beta (Bitis rhinoceros (West African gaboon viper)).